The chain runs to 1622 residues: Transient receptor potential cation channel subfamily M member 1 (1622 aa).

Disordered regions lie at residues 1–25, 64–95, 450–490, 618–641, and 822–856; these read MGSM…GSQK, PPLP…KHTQ, LAPP…EVEE, LGME…EEEI, and SKEN…HKKQ. Over 1-875 the chain is Cytoplasmic; it reads MGSMRKMSSS…CEFYNAPIVK (875 aa). Residues 8–25 show a composition bias toward low complexity; the sequence is SSSFKRGSIKSSTSGSQK. The span at 70-95 shows a compositional bias: polar residues; it reads APSTTGEDTKQADTQSGKWSVSKHTQ. Residues 472 to 483 show a composition bias toward basic residues; the sequence is GRGKGKGKKKGK. 2 stretches are compositionally biased toward basic and acidic residues: residues 823 to 832 and 843 to 853; these read KENEDGKEKE and GSRKGDEENEH. A helical transmembrane segment spans residues 876 to 896; sequence FWFYTISYLGYLLLFNYVILV. Residues 897–942 are Extracellular-facing; that stretch reads RMDGWPSPQEWIVISYIVSLALEKIREILMSEPGKLSQKIKVWLQE. A helical transmembrane segment spans residues 943–963; sequence YWNITDLVAISMFMVGAILRL. Residues 964–973 lie on the Cytoplasmic side of the membrane; that stretch reads QSQPYMGYGR. The chain crosses the membrane as a helical span at residues 974–994; sequence VIYCVDIILWYIRVLDIFGVN. Over 995–1006 the chain is Extracellular; sequence KYLGPYVMMIGK. Residues 1007–1027 traverse the membrane as a helical segment; it reads MMIDMLYFVVIMLVVLMSFGV. At 1028–1099 the chain is on the cytoplasmic side; the sequence is ARQAILHPEE…CIPGAWLTPA (72 aa). The helical transmembrane segment at 1100–1120 threads the bilayer; that stretch reads LMACYLLVANILLVNLLIAVF. A glycan (N-linked (GlcNAc...) asparagine) is linked at asparagine 1121. At 1121–1150 the chain is on the extracellular side; sequence NNTFFEVKSISNQVWKFQRYQLIMTFHDRP. A helical membrane pass occupies residues 1151-1171; the sequence is VLPPPMIILSHIYIIIMRLSG. The Cytoplasmic segment spans residues 1172-1622; the sequence is RCRKKREGDQ…QEKRSAETEC (451 aa). Positions 1224–1252 form a coiled coil; it reads DERIRVTSERVENMSMRLEEINERENFMK. 3 disordered regions span residues 1354-1383, 1389-1408, and 1567-1622; these read EDAK…RSRL, LSTE…EFDP, and CLRS…ETEC. The segment covering 1613-1622 has biased composition (basic and acidic residues); the sequence is QEKRSAETEC.

The protein belongs to the transient receptor (TC 1.A.4) family. LTrpC subfamily. TRPM1 sub-subfamily. As to quaternary structure, homodimer. Interacts with TRPM3; the interaction results in the formation of a heteromultimeric cation channel complex that are functionally different from the homomeric channels. Interacts with GPR179. Associates with both guanine nucleotide-binding proteins G(o) and beta-gamma G protein dimer; implicated in directly regulating TRPM1 channel open-state. In terms of tissue distribution, expressed in the retina where it localizes on dendritic tips of ON bipolar cells. Specifically, it is expressed in retinal bipolar cells (BPCs) of the ON subtype. Not detected in brain, lung, liver, heart, kidney, spleen or small intestine. Also expressed at high levels in poorly metastatic variants of B16 melanoma and at much reduced levels in highly metastatic variants of B16 melanoma.

It localises to the cell membrane. Its subcellular location is the endoplasmic reticulum membrane. The protein resides in the cell projection. It is found in the axon. The enzyme catalyses Ca(2+)(in) = Ca(2+)(out). It catalyses the reaction Mg(2+)(in) = Mg(2+)(out). The catalysed reaction is Mn(2+)(in) = Mn(2+)(out). It carries out the reaction Ni(2+)(in) = Ni(2+)(out). With respect to regulation, inhibited by extracellular zinc ions. Inhibited by intracellular Mg(2+). Activated by the neuroactive steroid pregnenolone sulfate. Negatively regulated by activation of GRM6 receptors in the ON-bipolar cells. Constitutively open nonselective divalent cation-conducting channels which mediate the influx of Ca(2+), Mg(2+), Mn(2+), Ba(2+), and Ni(2+) into the cytoplasm, leading to membrane depolarization. Impermeable to zinc ions. In addition, forms heteromultimeric ion channels with TRPM3 which are permeable for calcium and zinc ions. Plays an essential role for the depolarizing photoresponse of retinal ON bipolar cells. In the dark, tonic release of glutamate activates the G-protein coupled receptor for glutamate (GRM6), its activation induces the release of G(o) and the beta-gamma G protein dimer. Both subunits can interact and inactivate the TRPM1 channel. A light onset, induces decrease in glutamate release and deactivation of GRM6 leading to channel opening and membrane depolarization. May play a role in metastasis suppression. This chain is Transient receptor potential cation channel subfamily M member 1, found in Mus musculus (Mouse).